A 347-amino-acid chain; its full sequence is F-box/LRR-repeat/kelch-repeat protein At2g27520 (347 aa).

The region spanning 1–50 is the F-box domain; sequence MVRLDLPWDLVDEILSRLPATSLGRLRFTCKRWNALFKDPEFITKQFHKA. 4 LRR repeats span residues 59-82, 152-177, 196-220, and 261-285; these read LSNFGVYSMSTNLKEIPNNIEIAQ, CKLVEIFELKSNSWRVLSKVHPNVEK, KFNILSFDFTTETFRSVPLPFLYQD, and LSWSKSFTLEFDSLRDLPVMSILRI. Residues 138–187 form a Kelch 1 repeat; the sequence is KSYDSYKILRITYGCKLVEIFELKSNSWRVLSKVHPNVEKHYYGGVSFKG. A Kelch 2 repeat occupies 306-347; sequence MIYIVGKNGFKKLSYEKDRSNLWRLPFFFSYVPSLVGLYPPM.

This is F-box/LRR-repeat/kelch-repeat protein At2g27520 from Arabidopsis thaliana (Mouse-ear cress).